We begin with the raw amino-acid sequence, 220 residues long: HTH-type transcriptional repressor KstR (220 aa).

Positions 36–96 (RERRKRILDA…SALGREFSRI (61 aa)) constitute an HTH tetR-type domain. Positions 59 to 78 (QMRAVADRADVAVGTLYRYF) form a DNA-binding region, H-T-H motif.

Homodimer.

In terms of biological role, controls the expression of genes used for utilizing diverse lipids as energy sources. The polypeptide is HTH-type transcriptional repressor KstR (kstR) (Mycobacterium tuberculosis (strain ATCC 25618 / H37Rv)).